The chain runs to 447 residues: Vasoactive intestinal polypeptide receptor (447 aa).

Residues Met-1 to Val-103 lie on the Extracellular side of the membrane. Intrachain disulfides connect Cys-15/Cys-36, Cys-27/Cys-69, and Cys-50/Cys-86. N-linked (GlcNAc...) asparagine glycosylation is found at Asn-17, Asn-22, Asn-64, and Asn-91. Residues Lys-104 to Ser-128 form a helical membrane-spanning segment. Over Arg-129 to Arg-135 the chain is Cytoplasmic. Residues Asn-136–Val-155 traverse the membrane as a helical segment. Residues Lys-156–Lys-178 lie on the Extracellular side of the membrane. Asn-169 carries an N-linked (GlcNAc...) asparagine glycan. Cysteines 177 and 247 form a disulfide. A helical membrane pass occupies residues Ala-179–Leu-202. At His-203–Tyr-216 the chain is on the cytoplasmic side. Residues Phe-217 to Ala-238 traverse the membrane as a helical segment. Topologically, residues Lys-239–Leu-256 are extracellular. The helical transmembrane segment at Phe-257–Ile-280 threads the bilayer. Over Arg-281–Lys-305 the chain is Cytoplasmic. A helical transmembrane segment spans residues Ser-306–Pro-325. Residues Glu-326–Asp-337 are Extracellular-facing. Residues Leu-338–Gly-357 form a helical membrane-spanning segment. The Cytoplasmic segment spans residues Glu-358–Ser-447.

It belongs to the G-protein coupled receptor 2 family.

The protein resides in the cell membrane. Functionally, this is a receptor for VIP. The activity of this receptor is mediated by G proteins which activate adenylyl cyclase. The protein is Vasoactive intestinal polypeptide receptor (vipr1) of Carassius auratus (Goldfish).